The following is a 284-amino-acid chain: D-tagatose-1,6-bisphosphate aldolase subunit GatY (284 aa).

Aspartate 82 functions as the Proton donor in the catalytic mechanism. Zn(2+) contacts are provided by histidine 83 and histidine 180. A dihydroxyacetone phosphate-binding site is contributed by glycine 181. Residue histidine 208 participates in Zn(2+) binding. Dihydroxyacetone phosphate contacts are provided by residues 209-211 and 230-233; these read GAS and NVAT.

This sequence belongs to the class II fructose-bisphosphate aldolase family. TagBP aldolase GatY subfamily. Forms a complex with GatZ. The cofactor is Zn(2+).

It carries out the reaction D-tagatofuranose 1,6-bisphosphate = D-glyceraldehyde 3-phosphate + dihydroxyacetone phosphate. The protein operates within carbohydrate metabolism; D-tagatose 6-phosphate degradation; D-glyceraldehyde 3-phosphate and glycerone phosphate from D-tagatose 6-phosphate: step 2/2. Functionally, catalytic subunit of the tagatose-1,6-bisphosphate aldolase GatYZ, which catalyzes the reversible aldol condensation of dihydroxyacetone phosphate (DHAP or glycerone-phosphate) with glyceraldehyde 3-phosphate (G3P) to produce tagatose 1,6-bisphosphate (TBP). Requires GatZ subunit for full activity and stability. Is involved in the catabolism of galactitol. The sequence is that of D-tagatose-1,6-bisphosphate aldolase subunit GatY from Escherichia coli O157:H7.